The following is an 886-amino-acid chain: Valine--tRNA ligase (886 aa).

Positions 43 to 53 match the 'HIGH' region motif; the sequence is PYPTGRMHLGH. The 'KMSKS' region signature appears at 528-532; that stretch reads KMSKS. Lys-531 contributes to the ATP binding site.

It belongs to the class-I aminoacyl-tRNA synthetase family. ValS type 2 subfamily.

It is found in the cytoplasm. The enzyme catalyses tRNA(Val) + L-valine + ATP = L-valyl-tRNA(Val) + AMP + diphosphate. In terms of biological role, catalyzes the attachment of valine to tRNA(Val). As ValRS can inadvertently accommodate and process structurally similar amino acids such as threonine, to avoid such errors, it has a 'posttransfer' editing activity that hydrolyzes mischarged Thr-tRNA(Val) in a tRNA-dependent manner. The polypeptide is Valine--tRNA ligase (Methanococcus maripaludis (strain DSM 14266 / JCM 13030 / NBRC 101832 / S2 / LL)).